A 347-amino-acid polypeptide reads, in one-letter code: Isopentenyl-diphosphate delta-isomerase (347 aa).

9-10 serves as a coordination point for substrate; that stretch reads RK. FMN-binding positions include 65–67, Ser-95, and Asn-124; that span reads AMT. Position 95–97 (95–97) interacts with substrate; the sequence is STH. Gln-154 provides a ligand contact to substrate. Glu-155 contributes to the Mg(2+) binding site. FMN contacts are provided by residues Lys-186, Ser-211, Thr-216, 262–264, and 283–284; these read GVR and SR.

Belongs to the IPP isomerase type 2 family. As to quaternary structure, homooctamer. Dimer of tetramers. FMN is required as a cofactor. NADPH serves as cofactor. The cofactor is Mg(2+).

It localises to the cytoplasm. It carries out the reaction isopentenyl diphosphate = dimethylallyl diphosphate. Involved in the biosynthesis of isoprenoids. Catalyzes the 1,3-allylic rearrangement of the homoallylic substrate isopentenyl (IPP) to its allylic isomer, dimethylallyl diphosphate (DMAPP). The polypeptide is Isopentenyl-diphosphate delta-isomerase (Staphylococcus saprophyticus subsp. saprophyticus (strain ATCC 15305 / DSM 20229 / NCIMB 8711 / NCTC 7292 / S-41)).